Reading from the N-terminus, the 424-residue chain is Steryl acetyl hydrolase 1 (424 aa).

Ala-2 carries the post-translational modification N-acetylalanine. The Cytoplasmic portion of the chain corresponds to 2–45 (AANSGLDSKVEYYRLQENEIISAVSSEDADQNDAGFRLSTIHLH). Residues 46–66 (LFHGLKFAALLFTVVPVFIIL) form a helical; Signal-anchor for type II membrane protein membrane-spanning segment. The Lumenal segment spans residues 67–424 (DSMKIIFQRK…IARILEFMQS (358 aa)). An N-linked (GlcNAc...) asparagine glycan is attached at Asn-85. The Involved in the stabilization of the negatively charged intermediate by the formation of the oxyanion hole signature appears at 176–178 (HGG). The active site involves Ser-250. Asn-283 carries an N-linked (GlcNAc...) asparagine glycan. Residue His-395 is part of the active site. The N-linked (GlcNAc...) asparagine glycan is linked to Asn-401.

The protein belongs to the 'GDXG' lipolytic enzyme family.

It is found in the endoplasmic reticulum membrane. In terms of biological role, required for the deacetylation of acetylated sterols. Involved in the resistance to eugenol and pregnenolone toxicity. The protein is Steryl acetyl hydrolase 1 (SAY1) of Saccharomyces cerevisiae (strain ATCC 204508 / S288c) (Baker's yeast).